The sequence spans 216 residues: NKG2-D type II integral membrane protein (216 aa).

Over 1 to 51 the chain is Cytoplasmic; that stretch reads MGWIRGRRSRHSWEMSEFHNYNLDLKKSDFSTRWQKQRCPVVKSKCRENAS. Residues 52-72 form a helical; Signal-anchor for type II membrane protein membrane-spanning segment; sequence PFFFCCFIAVAMGIRFIIMVT. Residues 73–216 are Extracellular-facing; it reads IWSAVFLNSL…NTYICMQRTV (144 aa). 4 cysteine pairs are disulfide-bonded: cysteine 96–cysteine 105, cysteine 99–cysteine 110, cysteine 127–cysteine 211, and cysteine 189–cysteine 203. Residues 98–213 enclose the C-type lectin domain; it reads PCPKNWICYK…STPNTYICMQ (116 aa). Residues asparagine 131, asparagine 163, and asparagine 202 are each glycosylated (N-linked (GlcNAc...) asparagine).

In terms of assembly, homodimer; disulfide-linked. Heterohexamer composed of two subunits of KLRK1 and four subunits of HCST/DAP10. Interacts (via transmembrane domain) with HCST/DAP10 (via transmembrane domain); the interaction is required for KLRK1 NK cell surface and induces NK cell-mediated cytotoxicity. Does not interact with TYROBP. Interacts with CEACAM1; recruits PTPN6 that dephosphorylates VAV1. Expressed in natural killer (NK) cells, CD8(+) alpha-beta and gamma-delta T-cells. Expressed on essentially all CD56+CD3- NK cells from freshly isolated PBMC. Expressed in interferon-producing killer dendritic cells (IKDCs).

Its subcellular location is the cell membrane. Its function is as follows. Functions as an activating and costimulatory receptor involved in immunosurveillance upon binding to various cellular stress-inducible ligands displayed at the surface of autologous tumor cells and virus-infected cells. Provides both stimulatory and costimulatory innate immune responses on activated killer (NK) cells, leading to cytotoxic activity. Acts as a costimulatory receptor for T-cell receptor (TCR) in CD8(+) T-cell-mediated adaptive immune responses by amplifying T-cell activation. Stimulates perforin-mediated elimination of ligand-expressing tumor cells. Signaling involves calcium influx, culminating in the expression of TNF-alpha. Participates in NK cell-mediated bone marrow graft rejection. May play a regulatory role in differentiation and survival of NK cells. Binds to ligands belonging to various subfamilies of MHC class I-related glycoproteins including MICA, MICB, RAET1E, RAET1G, RAET1L/ULBP6, ULBP1, ULBP2, ULBP3 (ULBP2&gt;ULBP1&gt;ULBP3) and ULBP4. The protein is NKG2-D type II integral membrane protein (KLRK1) of Homo sapiens (Human).